Reading from the N-terminus, the 159-residue chain is Ribosomal RNA large subunit methyltransferase H (159 aa).

Residues L76, G108, and 127–132 (FGKLTL) each bind S-adenosyl-L-methionine.

The protein belongs to the RNA methyltransferase RlmH family. Homodimer.

It localises to the cytoplasm. It catalyses the reaction pseudouridine(1915) in 23S rRNA + S-adenosyl-L-methionine = N(3)-methylpseudouridine(1915) in 23S rRNA + S-adenosyl-L-homocysteine + H(+). Specifically methylates the pseudouridine at position 1915 (m3Psi1915) in 23S rRNA. The sequence is that of Ribosomal RNA large subunit methyltransferase H from Streptococcus sanguinis (strain SK36).